We begin with the raw amino-acid sequence, 622 residues long: FERM domain-containing protein 6 (622 aa).

The FERM domain occupies 16 to 328; that stretch reads RRVCIFLPND…NSHRLYMNLQ (313 aa). Residues 357–452 form a disordered region; it reads LDMDPLEKRS…KDRLEEDSQD (96 aa). 2 stretches are compositionally biased toward low complexity: residues 384–395 and 425–438; these read HSTASHSSSHTS and SSMT…TSGV. Ser522 carries the phosphoserine modification. A Phosphothreonine modification is found at Thr523. A phosphoserine mark is found at Ser525, Ser542, and Ser544.

The protein resides in the cytoplasm. It is found in the cell membrane. This chain is FERM domain-containing protein 6 (Frmd6), found in Mus musculus (Mouse).